The sequence spans 776 residues: Microtubule-associated protein tau (776 aa).

The span at 1–26 shows a compositional bias: basic and acidic residues; sequence MAEPRQEFDVMEDHAGTYGLGDRKDQ. Residues 1 to 591 are disordered; sequence MAEPRQEFDV…PVPMPDLKNV (591 aa). A2 is modified (N-acetylalanine). Y18 and Y29 each carry phosphotyrosine. K44 participates in a covalent cross-link: Glycyl lysine isopeptide (Lys-Gly) (interchain with G-Cter in ubiquitin). S46 and S61 each carry phosphoserine. The span at 61 to 71 shows a compositional bias: polar residues; it reads SETSDAKSTPT. T69, T71, and T111 each carry phosphothreonine. Basic and acidic residues-rich tracts occupy residues 179-189 and 207-216; these read EGGRHAPELLK and GGKERPGIKE. Residues 217–228 are compositionally biased toward acidic residues; the sequence is EVDEDRDVDESS. Residues 314-323 are compositionally biased toward basic and acidic residues; sequence EQAHSEEHLG. Low complexity predominate over residues 325–340; it reads AAFPGAPGEGPEAQGP. Basic and acidic residues-rich tracts occupy residues 344–356 and 381–393; these read EDTK…EPSE and KSKD…DKKA. Residues 442-453 are compositionally biased toward low complexity; that stretch reads VSSVTXRTGSSG. Over residues 455–466 the composition is skewed to basic and acidic residues; the sequence is KEMKLKGADGKT. T470 carries the phosphothreonine modification. Omega-N-methylarginine is present on R472. Residue K480 is modified to N6,N6-dimethyllysine; alternate. The residue at position 480 (K480) is an N6-acetyllysine; alternate. Phosphothreonine occurs at positions 486, 492, and 498. 3 positions are modified to phosphoserine: S502, S526, and S530. Positions 517 to 528 are enriched in basic and acidic residues; it reads KSERGEPPKSGD. The span at 529–549 shows a compositional bias: low complexity; the sequence is RSGYSSPGSPGTPGSRSRTPS. Y532 is modified (phosphotyrosine). S533, S534, and S537 each carry phosphoserine. 2 positions are modified to phosphothreonine: T540 and T547. Position 549 is a phosphoserine (S549). Residue T552 is modified to Phosphothreonine. K560 carries the post-translational modification N6-acetyllysine. T566 bears the Phosphothreonine mark. Residues S570 and S572 each carry the phosphoserine modification. Tau/MAP repeat units lie at residues 579–609, 610–640, 641–671, and 672–703; these read QTAP…GGGK, VQII…GGGS, VQIV…GGGQ, and VEVK…GGGN. A Glycyl lysine isopeptide (Lys-Gly) (interchain with G-Cter in ubiquitin) cross-link involves residue K589. Residue K594 is modified to N6-acetyllysine; alternate. The residue at position 594 (K594) is an N6-methyllysine; alternate. A Glycyl lysine isopeptide (Lys-Gly) (interchain with G-Cter in ubiquitin); alternate cross-link involves residue K594. S597 carries the post-translational modification Phosphoserine. Residue K602 forms a Glycyl lysine isopeptide (Lys-Gly) (interchain with G-Cter in ubiquitin) linkage. K616 carries the post-translational modification N6-acetyllysine; alternate. Residue K616 forms a Glycyl lysine isopeptide (Lys-Gly) (interchain with G-Cter in ubiquitin); alternate linkage. S620 and S624 each carry phosphoserine. K625 carries the N6-acetyllysine modification. A Phosphoserine modification is found at S628. K633 bears the N6-acetyllysine; alternate mark. K633 is covalently cross-linked (Glycyl lysine isopeptide (Lys-Gly) (interchain with G-Cter in ubiquitin); alternate). S640 carries the post-translational modification Phosphoserine. K646 bears the N6,N6-dimethyllysine; alternate mark. K646, K652, and K656 each carry N6-acetyllysine; alternate. Glycyl lysine isopeptide (Lys-Gly) (interchain with G-Cter in ubiquitin); alternate cross-links involve residues K646, K652, and K656. Residue S659 is modified to Phosphoserine. 3 positions are modified to N6-acetyllysine; alternate: K666, K678, and K682. Residues K666, K678, and K682 each participate in a glycyl lysine isopeptide (Lys-Gly) (interchain with G-Cter in ubiquitin); alternate cross-link. R684 carries the omega-N-methylarginine modification. S687 is modified (phosphoserine). K688 is covalently cross-linked (Glycyl lysine isopeptide (Lys-Gly) (interchain with G-Cter in ubiquitin)). S691 bears the Phosphoserine mark. K704 is modified (N6-acetyllysine; alternate). A Glycyl lysine isopeptide (Lys-Gly) (interchain with G-Cter in ubiquitin); alternate cross-link involves residue K704. K710 is covalently cross-linked (Glycyl lysine isopeptide (Lys-Gly) (interchain with G-Cter in ubiquitin)). Position 720 is an N6-acetyllysine; alternate (K720). K720 is covalently cross-linked (Glycyl lysine isopeptide (Lys-Gly) (interchain with G-Cter in ubiquitin); alternate). The residue at position 729 (Y729) is a Phosphotyrosine. 2 positions are modified to phosphoserine: S731 and S735. A disordered region spans residues 733 to 752; the sequence is VVSGDTSPRHLSNVSSTGSI. The segment covering 736 to 751 has biased composition (polar residues); sequence GDTSPRHLSNVSSTGS. T738 carries the phosphothreonine modification. 4 positions are modified to phosphoserine: S739, S744, S751, and S757. The residue at position 762 (T762) is a Phosphothreonine.

As to quaternary structure, interacts with MARK1, MARK2, MARK3 and MARK4. Interacts with SQSTM1 when polyubiquitinated. Interacts with PSMC2 through SQSTM1. Interacts with FKBP4. Binds to CSNK1D. Interacts with SGK1. Interacts with EPM2A; the interaction dephosphorylates MAPT at Ser-396. Interacts with PIN1. Interacts with LRRK2. Interacts with LRP1, leading to endocytosis; this interaction is reduced in the presence of LRPAP1/RAP. In terms of processing, polyubiquitinated. Requires functional TRAF6 and may provoke SQSTM1-dependent degradation by the proteasome. Phosphorylation at various serine and threonine residues in S-P or T-P motifs by proline-directed protein kinases (PDPK1, CDK1, CDK5, GSK3, MAPK) (a few sites per protein in interphase, more in mitosis), and at serine residues in K-X-G-S motifs by MAP/microtubule affinity-regulating kinase (MARK1, MARK2, MARK3 or MARK4), causing detachment from microtubules, and their disassembly. Phosphorylation at Ser-597 by BRSK1 and BRSK2 in neurons affects ability to bind microtubules and plays a role in neuron polarization. Phosphorylated by PHK. Dephosphorylation at several serine and threonine residues by the serine/threonine phosphatase PPP5C.

The protein resides in the cytoplasm. The protein localises to the cytosol. It is found in the cell membrane. It localises to the cytoskeleton. Its subcellular location is the cell projection. The protein resides in the axon. The protein localises to the dendrite. In terms of biological role, promotes microtubule assembly and stability, and might be involved in the establishment and maintenance of neuronal polarity. The C-terminus binds axonal microtubules while the N-terminus binds neural plasma membrane components, suggesting that tau functions as a linker protein between both. Axonal polarity is predetermined by tau localization (in the neuronal cell) in the domain of the cell body defined by the centrosome. The short isoforms allow plasticity of the cytoskeleton whereas the longer isoforms may preferentially play a role in its stabilization. The chain is Microtubule-associated protein tau (MAPT) from Hylobates lar (Lar gibbon).